The chain runs to 377 residues: Presenilin-associated rhomboid-like protein, mitochondrial (377 aa).

Residues 1–50 (MALQGWVQRGWRCGPAWAPPLGGGYRELSATQAPRLLGRRFNLFVQQKCG) constitute a mitochondrion transit peptide. The Mitochondrial matrix segment spans residues 51–99 (FRKAPRKVEPRRSDTGSSGEAYKRSALIPPLEETVFYPSPYPIRTLVKP). Phosphoserine is present on residues Ser63 and Ser68. Residues 100–119 (FFFTIGFTGCAFGSAAIWQY) traverse the membrane as a helical segment. The Mitochondrial intermembrane portion of the chain corresponds to 120 to 165 (ESLKSRVQSYFDGIKADWLDSIRPQKEGNLRKEINKWWNSLSDGQR). Residues 166-185 (TVTGIIAANALVFCLWRVPS) traverse the membrane as a helical segment. Residues 186 to 205 (LQRTMIRYFTSNPASKVLCS) lie on the Mitochondrial matrix side of the membrane. The helical transmembrane segment at 206–228 (PMLLSTFSHFSLFHMAANMYVLW) threads the bilayer. The Mitochondrial intermembrane portion of the chain corresponds to 229–242 (SFSSSIVNILGQEQ). A helical transmembrane segment spans residues 243-260 (FVAVYLSAGVISNFVSYV). The Mitochondrial matrix portion of the chain corresponds to 261-270 (CKVATGRYGP). Residues 271 to 287 (SLGASGAIMTVLAAVCT) form a helical membrane-spanning segment. Ser275 acts as the Nucleophile in catalysis. At 288 to 293 (KIPEGR) the chain is on the mitochondrial intermembrane side. The chain crosses the membrane as a helical span at residues 294–316 (LAIIFLPVFTFTAGNALKAIIAM). The Mitochondrial matrix segment spans residues 317–330 (DTAGMILGWKFFDH). The helical transmembrane segment at 331–352 (AAHLGGALFGIWYITYGHELIW) threads the bilayer. His333 is a catalytic residue. Residues 353–377 (KNREPLVKIWHEIRTNGPKKGGGSK) are Mitochondrial intermembrane-facing.

It belongs to the peptidase S54 family. In terms of assembly, interacts with PSEN1 and PSEN2. Binds OPA1. P-beta is proteolytically processed (beta-cleavage) in a PARL-dependent manner.

It localises to the mitochondrion inner membrane. The protein localises to the nucleus. It catalyses the reaction Cleaves type-1 transmembrane domains using a catalytic dyad composed of serine and histidine that are contributed by different transmembrane domains.. Required for the control of apoptosis during postnatal growth. Essential for proteolytic processing of an antiapoptotic form of OPA1 which prevents the release of mitochondrial cytochrome c in response to intrinsic apoptotic signals. Required for the maturation of PINK1 into its 52kDa mature form after its cleavage by mitochondrial-processing peptidase (MPP). Promotes cleavage of serine/threonine-protein phosphatase PGAM5 in damaged mitochondria in response to loss of mitochondrial membrane potential. Mediates differential cleavage of PINK1 and PGAM5 depending on the health status of mitochondria, disassociating from PINK1 and associating with PGAM5 in response to mitochondrial membrane potential loss. Required for processing of CLPB into a form with higher protein disaggregase activity by removing an autoinhibitory N-terminal peptide. Promotes processing of DIABLO/SMAC in the mitochondrion which is required for DIABLO apoptotic activity. Also required for cleavage of STARD7 and TTC19. Promotes changes in mitochondria morphology regulated by phosphorylation of P-beta domain. This is Presenilin-associated rhomboid-like protein, mitochondrial (Parl) from Mus musculus (Mouse).